Here is a 196-residue protein sequence, read N- to C-terminus: Probable GTP-binding protein EngB (196 aa).

The region spanning 21-195 (DVSEICLIGR…YELINKLLGS (175 aa)) is the EngB-type G domain. Residues 29–36 (GRSNVGKS), 56–60 (GKTRL), 75–78 (DAPG), 142–145 (TKLD), and 174–176 (ISN) each bind GTP. The Mg(2+) site is built by Ser-36 and Thr-58.

Belongs to the TRAFAC class TrmE-Era-EngA-EngB-Septin-like GTPase superfamily. EngB GTPase family. The cofactor is Mg(2+).

Functionally, necessary for normal cell division and for the maintenance of normal septation. The sequence is that of Probable GTP-binding protein EngB from Mycoplasma capricolum subsp. capricolum (strain California kid / ATCC 27343 / NCTC 10154).